We begin with the raw amino-acid sequence, 114 residues long: uncharacterized protein (114 aa).

The interval 1–37 (MLKKILSLFKKEEPKTEEKPTEVEEKKEEREEKEEKK) is disordered. Over residues 9-37 (FKKEEPKTEEKPTEVEEKKEEREEKEEKK) the composition is skewed to basic and acidic residues.

This is an uncharacterized protein from Aquifex aeolicus (strain VF5).